Reading from the N-terminus, the 568-residue chain is Estrogen receptor beta (568 aa).

Positions 1-177 (MHQQSPVDDV…SLRGKADMHY (177 aa)) are modulating. 2 consecutive NR C4-type zinc fingers follow at residues 178 to 198 (CAVCSDYASGYHYGVWSCEGC) and 214 to 238 (CPATNQCTIDKNRRKSCQACRLRKC). The nuclear receptor DNA-binding region spans 178–243 (CAVCSDYASG…RLRKCYEVGM (66 aa)). Residues 300–536 (TPEELIARIM…DLLLEMLDAH (237 aa)) enclose the NR LBD domain.

This sequence belongs to the nuclear hormone receptor family. NR3 subfamily. Binds DNA as a homodimer. Can form a heterodimer with ER-alpha.

It localises to the nucleus. Its function is as follows. Binds estrogens with an affinity similar to that of ER-alpha, and activates expression of reporter genes containing estrogen response elements (ERE) in an estrogen-dependent manner. The sequence is that of Estrogen receptor beta (esr2) from Oncorhynchus mykiss (Rainbow trout).